The sequence spans 565 residues: Receptor-like serine/threonine-protein kinase NCRK (565 aa).

The N-terminal stretch at 1–23 (MKMRVETALAILLVLISIQQCYG) is a signal peptide. Residues 24–103 (GVSNYTCTCF…SKKQYLSRKL (80 aa)) lie on the Extracellular side of the membrane. Residues Asn-27, Asn-37, Asn-45, Asn-77, and Asn-85 are each glycosylated (N-linked (GlcNAc...) asparagine). A helical membrane pass occupies residues 104–124 (VIVILLFCGVLISLAFLASMI). The Cytoplasmic portion of the chain corresponds to 125–565 (CYICRKDKFS…PVLLEPSAHI (441 aa)). Positions 210-495 (FSSNSVIGHG…REVVQILSTI (286 aa)) constitute a Protein kinase domain. Residues 216–224 (IGHGGSSCV) and Lys-238 each bind ATP. Asp-339 (proton acceptor) is an active-site residue. Thr-378 and Thr-383 each carry phosphothreonine. Tyr-391 carries the post-translational modification Phosphotyrosine.

This sequence belongs to the protein kinase superfamily. Ser/Thr protein kinase family. Interacts with ARAC5. Post-translationally, phosphorylated. In terms of tissue distribution, mostly expressed in leaf primordia, root and shoot apical meristems, lateral root primordia, and stele of older roots and hypocotyls. In leaves and cotyledons, highest levels observed in trichomes, vasculatures, and hydathode endothem.

The protein resides in the cell membrane. It localises to the prevacuolar compartment membrane. It is found in the endosome. It catalyses the reaction L-seryl-[protein] + ATP = O-phospho-L-seryl-[protein] + ADP + H(+). The enzyme catalyses L-threonyl-[protein] + ATP = O-phospho-L-threonyl-[protein] + ADP + H(+). The chain is Receptor-like serine/threonine-protein kinase NCRK (NCRK) from Arabidopsis thaliana (Mouse-ear cress).